Consider the following 874-residue polypeptide: MSALSRWLLIPPVSARLSERYQGYRRHGASPFSAALGCLWTILAWIVFPLEHPRWQRIRDGHKALYPHINAARPRPLDPARYLIQTLWLVMISSTKERHEPRWRSFARLKDVRGRYHQWMDTLPERVRQKTTHLEKEKELGHLSNGARRFILGVIVTFSLILALICITQPFNPLSQFIFLLLLWGVALLVRRMPGRFSALMLIVLSLTVSCRYIWWRYTSTLNWDDPVSLVCGLILLFAETYAWIVLVLGYFQVVWPLNRQPVPLPKEMSQWPTVDIFVPTYNEDLNVVKNTIYASLGIDWPKDKLNIWILDDGGRESFRQFARHVGVHYIARATHEHAKAGNINNALKHAKGEFVAIFDCDHVPTRSFLQMTMGWFLKEKQLAMMQTPHHFFSPDPFERNLGRFRKTPNEGTLFYGLVQDGNDMWDATFFCGSCAVIRRKPLDEIGGIAVETVTEDAHTSLRLHRRGYTSAYMRIPQSAGLATESLSAHIGQRIRWARGMVQIFRLDNPLFGKGLKLAQRLCYLNAMFHFLSGIPRLIFLTAPLAFLLLHAYIIYAPALMIALFVIPHMVHASLTNSKIQGKYRHSFWSEIYETVLAWYIAPPTLVALINPHKGKFNVTAKGGLVEEKYVDWVISRPYIFLVLLNLLGVAAGVWRYYYGPENETLTVIVSLVWVFYNLVILGGAVAVSVESKQVRRAHRVEIAMPGAIAREDGHLFSCTVHDFSDGGLGIKINGQAQVLEGQKVNLLLKRGQQEYVFPTQVVRVTGNEVGLQLMPLTTKQHIDFVQCTFARADTWALWQDSFPEDKPLESLLDILKLGFRGYRHLAEFAPPSVKVIFRSLTALIAWIVSFIPRRPERQAAIQPSDRVMAQAQQ.

4 helical membrane-spanning segments follow: residues 30 to 50 (SPFS…VFPL), 151 to 171 (ILGV…TQPF), 173 to 193 (PLSQ…VRRM), and 230 to 250 (LVCG…LVLG). The interval 271–364 (QWPTVDIFVP…FVAIFDCDHV (94 aa)) is catalytic subdomain A. Asp313 is a catalytic residue. The substrate site is built by Asp360 and Asp362. The interval 441–501 (KPLDEIGGIA…GQRIRWARGM (61 aa)) is catalytic subdomain B. Residue Asp457 is part of the active site. Transmembrane regions (helical) follow at residues 525–545 (LNAM…TAPL), 547–567 (FLLL…LFVI), 592–612 (IYET…LINP), 634–654 (VISR…AAGV), and 668–688 (VIVS…AVAV). One can recognise a PilZ domain in the interval 694–790 (QVRRAHRVEI…QHIDFVQCTF (97 aa)). A helical membrane pass occupies residues 833-853 (SVKVIFRSLTALIAWIVSFIP).

The protein belongs to the glycosyltransferase 2 family. Mg(2+) is required as a cofactor.

Its subcellular location is the cell inner membrane. It catalyses the reaction [(1-&gt;4)-beta-D-glucosyl](n) + UDP-alpha-D-glucose = [(1-&gt;4)-beta-D-glucosyl](n+1) + UDP + H(+). It participates in glycan metabolism; bacterial cellulose biosynthesis. Activated by bis-(3'-5') cyclic diguanylic acid (c-di-GMP). In terms of biological role, catalytic subunit of cellulose synthase. It polymerizes uridine 5'-diphosphate glucose to cellulose, which is produced as an extracellular component for mechanical and chemical protection at the onset of the stationary phase, when the cells exhibit multicellular behavior (rdar morphotype). Coexpression of cellulose and thin aggregative fimbriae leads to a hydrophobic network with tightly packed cells embedded in a highly inert matrix. The sequence is that of Cellulose synthase catalytic subunit [UDP-forming] (bcsA) from Salmonella typhi.